The following is a 508-amino-acid chain: Steroid 17-alpha-hydroxylase/17,20 lyase (508 aa).

Asparagine 202 contacts substrate. Position 442 (cysteine 442) interacts with heme.

The protein belongs to the cytochrome P450 family. Heme serves as cofactor.

The protein localises to the endoplasmic reticulum membrane. The protein resides in the microsome membrane. It catalyses the reaction a C21-steroid + reduced [NADPH--hemoprotein reductase] + O2 = a 17alpha-hydroxy-C21-steroid + oxidized [NADPH--hemoprotein reductase] + H2O + H(+). The enzyme catalyses progesterone + reduced [NADPH--hemoprotein reductase] + O2 = 17alpha-hydroxyprogesterone + oxidized [NADPH--hemoprotein reductase] + H2O + H(+). The catalysed reaction is pregnenolone + reduced [NADPH--hemoprotein reductase] + O2 = 17alpha-hydroxypregnenolone + oxidized [NADPH--hemoprotein reductase] + H2O + H(+). It carries out the reaction 17alpha-hydroxyprogesterone + reduced [NADPH--hemoprotein reductase] + O2 = androst-4-ene-3,17-dione + acetate + oxidized [NADPH--hemoprotein reductase] + H2O + 2 H(+). It catalyses the reaction 17alpha-hydroxyprogesterone + reduced [NADPH--hemoprotein reductase] + O2 = 16alpha,17alpha-dihydroxyprogesterone + oxidized [NADPH--hemoprotein reductase] + H2O + H(+). The enzyme catalyses 16alpha,17alpha-dihydroxyprogesterone + reduced [NADPH--hemoprotein reductase] + O2 = 6beta,16alpha,17alpha-trihydroxyprogesterone + oxidized [NADPH--hemoprotein reductase] + H2O + H(+). The catalysed reaction is 17alpha-hydroxypregnenolone + reduced [NADPH--hemoprotein reductase] + O2 = 3beta-hydroxyandrost-5-en-17-one + acetate + oxidized [NADPH--hemoprotein reductase] + H2O + 2 H(+). It carries out the reaction 16alpha,17alpha-dihydroxypregnenolone + reduced [NADPH--hemoprotein reductase] + O2 = 3beta,16alpha-dihydroxy-androst-5-en-17-one + acetate + oxidized [NADPH--hemoprotein reductase] + H2O + 2 H(+). It catalyses the reaction 3beta-hydroxyandrost-5-en-17-one + reduced [NADPH--hemoprotein reductase] + O2 = 3beta,16alpha-dihydroxy-androst-5-en-17-one + oxidized [NADPH--hemoprotein reductase] + H2O + H(+). The enzyme catalyses androst-4-ene-3,17-dione + reduced [NADPH--hemoprotein reductase] + O2 = 16alpha-hydroxyandrost-4-ene-3,17-dione + oxidized [NADPH--hemoprotein reductase] + H2O + H(+). The protein operates within steroid hormone biosynthesis. It participates in steroid biosynthesis; glucocorticoid biosynthesis. Regulated predominantly by intracellular cAMP levels. The 17,20-lyase activity is stimulated by cytochrome b5, which acts as an allosteric effector increasing the Vmax of the lyase activity. A cytochrome P450 monooxygenase involved in corticoid and androgen biosynthesis. Catalyzes 17-alpha hydroxylation of C21 steroids, which is common for both pathways. A second oxidative step, required only for androgen synthesis, involves an acyl-carbon cleavage. The 17-alpha hydroxy intermediates, as part of adrenal glucocorticoids biosynthesis pathway, are precursors of cortisol. Hydroxylates steroid hormones, pregnenolone and progesterone to form 17-alpha hydroxy metabolites, followed by the cleavage of the C17-C20 bond to form C19 steroids, dehydroepiandrosterone (DHEA) and androstenedione. Has 16-alpha hydroxylase activity. Catalyzes 16-alpha hydroxylation of 17-alpha hydroxy pregnenolone, followed by the cleavage of the C17-C20 bond to form 16-alpha-hydroxy DHEA. Also 16-alpha hydroxylates androgens, relevant for estriol synthesis. Mechanistically, uses molecular oxygen inserting one oxygen atom into a substrate, and reducing the second into a water molecule, with two electrons provided by NADPH via cytochrome P450 reductase (CPR; NADPH-ferrihemoprotein reductase). This Papio cynocephalus (Yellow baboon) protein is Steroid 17-alpha-hydroxylase/17,20 lyase (CYP17A1).